A 561-amino-acid chain; its full sequence is Urocanate hydratase (561 aa).

Residues 52–53 (GG), Gln-130, 176–178 (GMG), Glu-196, Arg-201, 242–243 (NA), 263–267 (QTSAH), 273–274 (YL), and Tyr-322 contribute to the NAD(+) site. Residue Cys-410 is part of the active site. An NAD(+)-binding site is contributed by Gly-492.

This sequence belongs to the urocanase family. NAD(+) is required as a cofactor.

It localises to the cytoplasm. It carries out the reaction 4-imidazolone-5-propanoate = trans-urocanate + H2O. The protein operates within amino-acid degradation; L-histidine degradation into L-glutamate; N-formimidoyl-L-glutamate from L-histidine: step 2/3. Its function is as follows. Catalyzes the conversion of urocanate to 4-imidazolone-5-propionate. The protein is Urocanate hydratase of Salmonella gallinarum (strain 287/91 / NCTC 13346).